We begin with the raw amino-acid sequence, 32 residues long: Sodium channel neurotoxin BmK NT2 (32 aa).

The 31-residue stretch at 2–32 folds into the LCN-type CS-alpha/beta domain; the sequence is RDAYIAKPENCVYHCAGNEGCNNLCTCNGAT.

Expressed by the venom gland.

The protein localises to the secreted. Its function is as follows. Alpha toxins bind voltage-independently at site-3 of sodium channels (Nav) and inhibit the inactivation of the activated channels, thereby blocking neuronal transmission. This toxin dose-dependently delays inactivation of voltage-gated sodium channels (Nav) (EC(50)=0.91 uM), and shifts the steady-state activation and inactivation to hyperpolarized direction. In addition, it dose-dependently alters calcium dynamics and increases phosphorylation of MAP kinases 1/3 (MAPK1/MAPK3) and cAMP-response element binding (CREB) proteins in neocortical neurons. This effect is eliminated by tetrodotoxin, a Nav blocker. This chain is Sodium channel neurotoxin BmK NT2, found in Olivierus martensii (Manchurian scorpion).